The chain runs to 426 residues: DNA primase DnaG (426 aa).

Positions 165 to 241 (DEIIIVEGRA…DIDYVAKAPP (77 aa)) constitute a Toprim domain. Mg(2+)-binding residues include Glu-171, Asp-215, and Asp-217. Residues 278–298 (PAVEERPQPPQPQPPAVQPVQ) form a disordered region. Residues 285 to 294 (QPPQPQPPAV) are compositionally biased toward pro residues.

Belongs to the archaeal DnaG primase family. Forms a ternary complex with MCM helicase and DNA. Component of the archaeal exosome complex. The cofactor is Mg(2+).

It catalyses the reaction ssDNA + n NTP = ssDNA/pppN(pN)n-1 hybrid + (n-1) diphosphate.. Functionally, RNA polymerase that catalyzes the synthesis of short RNA molecules used as primers for DNA polymerase during DNA replication. Also part of the exosome, which is a complex involved in RNA degradation. Acts as a poly(A)-binding protein that enhances the interaction between heteromeric, adenine-rich transcripts and the exosome. The sequence is that of DNA primase DnaG from Hyperthermus butylicus (strain DSM 5456 / JCM 9403 / PLM1-5).